Here is a 126-residue protein sequence, read N- to C-terminus: MQDALTHGMLREYLPILVLLAMAIGLGLILIAAAAIIAYRNPDPEKVSAYECGFNAFDDARMKFDVRFYLVSILFIIFDLEVAFLFPWAVAFGDMSMTAFWSMMVFLSVLTVGFAYEWKKGALEWA.

A run of 3 helical transmembrane segments spans residues 16 to 36 (ILVLLAMAIGLGLILIAAAAI), 73 to 93 (ILFIIFDLEVAFLFPWAVAFG), and 95 to 115 (MSMTAFWSMMVFLSVLTVGFA).

This sequence belongs to the complex I subunit 3 family. In terms of assembly, NDH-1 is composed of 14 different subunits. Subunits NuoA, H, J, K, L, M, N constitute the membrane sector of the complex.

It localises to the cell inner membrane. The catalysed reaction is a quinone + NADH + 5 H(+)(in) = a quinol + NAD(+) + 4 H(+)(out). In terms of biological role, NDH-1 shuttles electrons from NADH, via FMN and iron-sulfur (Fe-S) centers, to quinones in the respiratory chain. The immediate electron acceptor for the enzyme in this species is believed to be ubiquinone. Couples the redox reaction to proton translocation (for every two electrons transferred, four hydrogen ions are translocated across the cytoplasmic membrane), and thus conserves the redox energy in a proton gradient. This Rhodobacter capsulatus (Rhodopseudomonas capsulata) protein is NADH-quinone oxidoreductase subunit A.